Consider the following 429-residue polypeptide: MKERTIQPVNNGLNGNITIPGDKSISHRAVMFGSIAEGKTTIKGFLSGADCLSTISCFKEMGVEITQNGDEVTVVGKGLEGLQEPKAVLDVGNSGTTIRLMSGILANTPFFSCVQGDESIAKRPMKRVTNPLKQMGANIDGREEGTFTPLTIRGGDLKAIEYISPVASAQVKSAILLAGLRAEGVTAVTEPHISRDHTERMLEAFGVKVTREGKTVKLSGGQKLTATDIQVPGDVSSAAFFLVAGAIIPNSKLILQNVGMNPTRTGIIDVLEKMGATFTIEPINEGASEPAANITIETSSLKGIEIGGDIIPRLIDEIPVIALAATQAEGITVIRDAHELKVKETNRIDTVVAELTKLGARIEATDDGMIIYGKSALKGNTVNSYGDHRIGMMLAIAGCLAEGKIIIEDAEAVGVSYPTFFDELQKLAK.

Positions 23, 24, and 28 each coordinate 3-phosphoshikimate. A phosphoenolpyruvate-binding site is contributed by lysine 23. Positions 95 and 123 each coordinate phosphoenolpyruvate. Serine 168, glutamine 170, aspartate 316, and lysine 343 together coordinate 3-phosphoshikimate. Glutamine 170 is a phosphoenolpyruvate binding site. The Proton acceptor role is filled by aspartate 316. 2 residues coordinate phosphoenolpyruvate: arginine 347 and arginine 389.

Belongs to the EPSP synthase family. In terms of assembly, monomer.

It is found in the cytoplasm. The enzyme catalyses 3-phosphoshikimate + phosphoenolpyruvate = 5-O-(1-carboxyvinyl)-3-phosphoshikimate + phosphate. It participates in metabolic intermediate biosynthesis; chorismate biosynthesis; chorismate from D-erythrose 4-phosphate and phosphoenolpyruvate: step 6/7. Catalyzes the transfer of the enolpyruvyl moiety of phosphoenolpyruvate (PEP) to the 5-hydroxyl of shikimate-3-phosphate (S3P) to produce enolpyruvyl shikimate-3-phosphate and inorganic phosphate. The chain is 3-phosphoshikimate 1-carboxyvinyltransferase from Bacillus cereus (strain G9842).